The following is a 353-amino-acid chain: MESPRGRPGPETDLLALGEQQAAIFGDGPGQTPSERPSDLRLSEDEEAENVGGASCHPKASLKTSSCSFVHPPEWEAPEDKPGRGGTFSGAGSRLGAPDPEFDLHGSSRRKDPEPPEAKPESERVCRRGSPVGGGMDVEQKEDDNEAAEAGRGGRSFSSRLQDSRSLDGLSGACGGPASSGGAESGAGGGRRATISSPLELEGTVSRHGDLTHFVANNLQLKIRLSGAPQPPPPAPTRPCSAPTPTPAIPPIDPDVLRDLERLSRELGGRVDRLLRGLGGAVQELTALSVGCIQTYRDAVDSLGEAVDMSIKGMYTLLARCEELERALQPVQGLARQVRDIRRTLEVLEALCK.

Positions Ala23 to Thr194 are disordered. The segment covering Phe102–Cys126 has biased composition (basic and acidic residues). Phosphoserine is present on residues Ser130 and Ser166. Gly residues predominate over residues Gly172–Arg191. Thr194 is subject to Phosphothreonine. A Phosphoserine modification is found at Ser197. Residues Leu225–Asp253 form a disordered region. Positions Pro229 to Asp253 are enriched in pro residues.

Belongs to the BORCS6 family. As to quaternary structure, component of the BLOC-one-related complex (BORC) which is composed of BLOC1S1, BLOC1S2, BORCS5, BORCS6, BORCS7, BORCS8, KXD1 and SNAPIN.

The protein localises to the lysosome membrane. Functionally, as part of the BORC complex may play a role in lysosomes movement and localization at the cell periphery. Associated with the cytosolic face of lysosomes, the BORC complex may recruit ARL8B and couple lysosomes to microtubule plus-end-directed kinesin motor. This is BLOC-1-related complex subunit 6 from Bos taurus (Bovine).